The sequence spans 699 residues: uncharacterized protein (699 aa).

3 disordered regions span residues 175–208, 289–364, and 539–603; these read PTLG…ASLS, PTAK…EEPD, and RAKE…KEYL. A compositionally biased stretch (basic and acidic residues) spans 183–194; sequence PSKHGDHSDSKT. The span at 195 to 208 shows a compositional bias: polar residues; it reads YESPISNSQAASLS. Residues 308 to 322 show a composition bias toward basic residues; the sequence is SKHKKRPKRLSKFKQ. Residues 323 to 338 show a composition bias toward basic and acidic residues; that stretch reads AKLETKKSGNKDHATS. Polar residues-rich tracts occupy residues 339 to 360 and 548 to 573; these read SEKL…SSSI and HSNA…NTKL. Positions 574 to 603 are enriched in basic and acidic residues; sequence NPKEEDKSTVESELKAPPKEKSSETSKEYL.

It is found in the cytoplasm. This is an uncharacterized protein from Schizosaccharomyces pombe (strain 972 / ATCC 24843) (Fission yeast).